The sequence spans 498 residues: POTE ankyrin domain family member A (498 aa).

5 ANK repeats span residues 98 to 127, 131 to 160, 164 to 193, 197 to 226, and 230 to 259; these read KKRT…QLHV, KKRT…DPNL, YGNT…DIES, GGLT…NLNA, and FGRT…DVFS. The disordered stretch occupies residues 289 to 410; the sequence is NQMPNNSSGN…SNEKNKVKSQ (122 aa). Residues 290-302 are compositionally biased toward polar residues; it reads QMPNNSSGNSNPE. Positions 303–338 are enriched in basic and acidic residues; sequence QDLKLTSEEEPQRLKGSENSQHEKVTQEPDINKDCD. Positions 348-359 are enriched in polar residues; the sequence is HGSNNVGLSENL. Residues 392 to 406 are compositionally biased toward basic and acidic residues; sequence EEYHRPEKKSNEKNK. Positions 469–497 form a coiled coil; the sequence is EHLLELKNSHYEQLTVEVEQMENMVHVLQ.

It belongs to the POTE family.

This Homo sapiens (Human) protein is POTE ankyrin domain family member A (POTEA).